Here is a 274-residue protein sequence, read N- to C-terminus: Shikimate dehydrogenase (NADP(+)) (274 aa).

Shikimate-binding positions include 14-16 (SLS) and Thr-61. Lys-65 acts as the Proton acceptor in catalysis. Shikimate contacts are provided by Asn-85 and Asp-106. Residues 130 to 134 (GAGGA), 153 to 158 (NRTAER), and Ala-217 each bind NADP(+). Tyr-219 lines the shikimate pocket. Gly-240 contributes to the NADP(+) binding site.

Belongs to the shikimate dehydrogenase family. In terms of assembly, homodimer.

It carries out the reaction shikimate + NADP(+) = 3-dehydroshikimate + NADPH + H(+). It participates in metabolic intermediate biosynthesis; chorismate biosynthesis; chorismate from D-erythrose 4-phosphate and phosphoenolpyruvate: step 4/7. In terms of biological role, involved in the biosynthesis of the chorismate, which leads to the biosynthesis of aromatic amino acids. Catalyzes the reversible NADPH linked reduction of 3-dehydroshikimate (DHSA) to yield shikimate (SA). This is Shikimate dehydrogenase (NADP(+)) from Halorubrum lacusprofundi (strain ATCC 49239 / DSM 5036 / JCM 8891 / ACAM 34).